Consider the following 284-residue polypeptide: NADH-cytochrome b5 reductase 1 (284 aa).

The helical transmembrane segment at 8–28 (PLVIFSTLAAIILAAVAVYVV) threads the bilayer. The FAD-binding FR-type domain occupies 41-144 (DVFQKFPLIE…RGPKGFFTYT (104 aa)). Residues 124 to 139 (DSKS…GPKG) and 150 to 182 (HLGM…KISL) contribute to the FAD site.

This sequence belongs to the flavoprotein pyridine nucleotide cytochrome reductase family. Monomer. Component of the 2-(3-amino-3-carboxypropyl)histidine synthase complex composed of DPH1, DPH2, DPH3 and a NADH-dependent reductase, predominantly CBR1. FAD is required as a cofactor.

The protein localises to the mitochondrion outer membrane. It catalyses the reaction 2 Fe(III)-[cytochrome b5] + NADH = 2 Fe(II)-[cytochrome b5] + NAD(+) + H(+). The catalysed reaction is 2 Fe(3+)-[Dph3] + NADH = 2 Fe(2+)-[Dph3] + NAD(+) + H(+). Its pathway is protein modification; peptidyl-diphthamide biosynthesis. Functionally, NADH-dependent reductase for DPH3 and cytochrome b5. Required for the first step of diphthamide biosynthesis, a post-translational modification of histidine which occurs in elongation factor 2. DPH1 and DPH2 transfer a 3-amino-3-carboxypropyl (ACP) group from S-adenosyl-L-methionine (SAM) to a histidine residue, the reaction is assisted by a reduction system comprising DPH3 and a NADH-dependent reductase, predominantly CBR1. By reducing DPH3, also involved in the formation of the tRNA wobble base modification mcm5s 2U (5-methoxycarbonylmethyl-2-thiouridine), mediated by the elongator complex. The cytochrome b5/NADH cytochrome b5 reductase electron transfer system supports the catalytic activity of several sterol biosynthetic enzymes. This is NADH-cytochrome b5 reductase 1 (CBR1) from Meyerozyma guilliermondii (strain ATCC 6260 / CBS 566 / DSM 6381 / JCM 1539 / NBRC 10279 / NRRL Y-324) (Yeast).